Reading from the N-terminus, the 358-residue chain is Ion-translocating oxidoreductase complex subunit D (358 aa).

The next 4 helical transmembrane spans lie at 19–39 (IMLW…YYFG), 41–61 (GVVL…FIAI), 79–99 (LTAL…IIII), and 125–145 (IGYV…MPPI). Thr186 bears the FMN phosphoryl threonine mark. 5 consecutive transmembrane segments (helical) span residues 220 to 240 (FAQG…FLIL), 248 to 268 (IPVA…FTGF), 271 to 291 (LSAI…FIAT), 297 to 317 (SITP…VYLI), and 321 to 341 (GNYP…VPLI).

It belongs to the NqrB/RnfD family. As to quaternary structure, the complex is composed of six subunits: RnfA, RnfB, RnfC, RnfD, RnfE and RnfG. FMN serves as cofactor.

The protein localises to the cell inner membrane. Its function is as follows. Part of a membrane-bound complex that couples electron transfer with translocation of ions across the membrane. The protein is Ion-translocating oxidoreductase complex subunit D of Haemophilus influenzae (strain 86-028NP).